A 1304-amino-acid polypeptide reads, in one-letter code: MGAASGRRGPGLLLPLLLLLPPQPALALDPGLQPGNFSADEAGAQLFAQSYNSSAEQVLFQSVAASWAHDTNITAENARRQEEAALLSQEFAEAWGQKAKELYEPVWQNFTDPQLRRIIGAVRTLGSANLPLAKRQQYNALLSNMSRIYSTAKVCLPNKTATCWSLDPDLTNILASSRSYAMLLFAWEGWHNAAGIPLKPLYEDFTALSNEAYKQDGFTDTGAYWRSWYNSPTFEDDLEHLYQQLEPLYLNLHAFVRRALHRRYGDRYINLRGPIPAHLLGDMWAQSWENIYDMVVPFPDKPNLDVTSTMLQQGWNATHMFRVAEEFFTSLELSPMPPEFWEGSMLEKPADGREVVCHASAWDFYNRKDFRIKQCTRVTMDQLSTVHHEMGHIQYYLQYKDLPVSLRGGANPGFHEAIGDVLALSVSTPAHLHKIGLLDNVTNDTESDINYLLKMALEKIAFLPFGYLVDQWRWGVFSGRTPNSRYNFDWWYLRTKYQGICPPVTRNETHFDAGAKFHVPNVTPYIRYFVSFVLQFQFHEALCKEAGYEGPLHQCDIYQSTKAGAKLRKVLQAGSSRPWQEVLKDMVGLDALDAQPLLKYFQPVTQWLQEQNQQNGEVLGWPEYQWHPPLPDNYPEGIDLVTDEAEASKFVEEYDRTSQVVWNEYAEANWNYNTNITTETSKILLQKNMQIANHTLKYGTQARRFDVNQLQNTTIKRIIKKVQDLERAALPAQELEEYNKILLDMETTYSVATVCHTNGSCLQLEPDLTNVMATSRKYEDLLWAWEGWRDKAGRAILQFYPKYVELINQAARLNGYVDAGDSWRSMYETPSLEQDLERLFQELQPLYLNLHAYVRRALHRHYGAQHINLEGPIPAHLLGNMWAQTWSNIYDLVVPFPSAPSMDTTEAMLKQGWTPRRMFKEADDFFTSLGLLPVPPEFWNKSMLEKPTDGREVVCHASAWDFYNGKDFRIKQCTTVNLEDLVVAHHEMGHIQYFMQYKDLPVALREGANPGFHEAIGDVLALSVSTPKHLHSLNLLSSEGGSDEHDINFLMKMALDKIAFIPFSYLVDQWRWRVFDGSITKENYNQEWWSLRLKYQGLCPPVPRTQGDFDPGAKFHIPSSVPYIRYFVSFIIQFQFHEALCQAAGHTGPLHKCDIYQSKEAGQRLATAMKLGFSRPWPEAMQLITGQPNMSASAMLSYFKPLLDWLRTENELHGEKLGWPQYNWTPNSARSEGPLPDSGRVSFLGLDLDAQQARVGQWLLLFLGIALLVATLGLSQRLFSIRHRSLHRHSHGPQFDSEVELRHS.

Residues 1 to 27 (MGAASGRRGPGLLLPLLLLLPPQPALA) form the signal peptide. The Extracellular segment spans residues 28 to 1257 (LDPGLQPGNF…LDAQQARVGQ (1230 aa)). Residues asparagine 36, asparagine 52, asparagine 72, asparagine 109, asparagine 144, and asparagine 158 are each glycosylated (N-linked (GlcNAc...) asparagine). Peptidase M2 domains are found at residues 38–622 (SADE…LGWP) and 641–1220 (VTDE…LGWP). Cysteine 155 and cysteine 163 are oxidised to a cystine. Chloride is bound at residue tyrosine 229. Asparagine 316 carries an N-linked (GlcNAc...) asparagine glycan. The cysteines at positions 357 and 375 are disulfide-linked. A Zn(2+)-binding site is contributed by histidine 388. The active-site Proton acceptor 1 is glutamate 389. Zn(2+)-binding residues include histidine 392 and glutamate 416. N-linked (GlcNAc...) asparagine glycans are attached at residues asparagine 440, asparagine 443, and asparagine 507. The Proton donor 1 role is filled by histidine 518. Arginine 527 is a chloride binding site. An intrachain disulfide couples cysteine 543 to cysteine 555. Asparagine 675 carries N-linked (GlcNAc...) asparagine glycosylation. N-linked (GlcNAc...) (complex) asparagine glycosylation is found at asparagine 693 and asparagine 712. Cysteines 755 and 761 form a disulfide. An N-linked (GlcNAc...) asparagine glycan is attached at asparagine 758. Arginine 789 and tyrosine 827 together coordinate chloride. Asparagine 940 carries an N-linked (GlcNAc...) asparagine glycan. Cysteine 955 and cysteine 973 form a disulfide bridge. Histidine 986 provides a ligand contact to Zn(2+). Residue glutamate 987 is the Proton acceptor 2 of the active site. Zn(2+)-binding residues include histidine 990 and glutamate 1014. Residues tryptophan 1088 and arginine 1092 each coordinate chloride. Histidine 1116 (proton donor 2) is an active-site residue. Arginine 1125 provides a ligand contact to chloride. Cysteine 1141 and cysteine 1153 are disulfide-bonded. A glycan (N-linked (GlcNAc...) asparagine) is linked at asparagine 1189. The juxtamembrane stalk stretch occupies residues 1213 to 1254 (HGEKLGWPQYNWTPNSARSEGPLPDSGRVSFLGLDLDAQQAR). Residues 1258-1274 (WLLLFLGIALLVATLGL) traverse the membrane as a helical segment. Over 1275-1304 (SQRLFSIRHRSLHRHSHGPQFDSEVELRHS) the chain is Cytoplasmic. At serine 1297 the chain carries Phosphoserine.

The protein belongs to the peptidase M2 family. In terms of assembly, monomer and homodimer; homodimerizes following binding to an inhibitor. Interacts with calmodulin (CALM1, CALM2 or CALM3); interaction takes place in the cytoplasmic region and regulates phosphorylation and proteolytic cleavage. The cofactor is Zn(2+). Requires chloride as cofactor. Post-translationally, produced following proteolytic cleavage by secretase enzymes that cleave the transmembrane form in the juxtamembrane stalk region upstream of the transmembrane region. Cleavage can take place at different sites of the juxtamembrane stalk region. In terms of processing, phosphorylated by CK2 on Ser-1297; which allows membrane retention. Phosphorylated on tyrosine residues on its extracellular part, promoting cleavage by secretase enzymes and formation of the soluble form (Angiotensin-converting enzyme, soluble form).

The protein localises to the cell membrane. It is found in the cytoplasm. Its subcellular location is the secreted. It catalyses the reaction Release of a C-terminal dipeptide, oligopeptide-|-Xaa-Yaa, when Xaa is not Pro, and Yaa is neither Asp nor Glu. Thus, conversion of angiotensin I to angiotensin II, with increase in vasoconstrictor activity, but no action on angiotensin II.. The catalysed reaction is angiotensin I + H2O = L-histidyl-L-leucine + angiotensin II. It carries out the reaction bradykinin + H2O = L-Phe-L-Arg + bradykinin(1-7). The enzyme catalyses substance P + H2O = substance P(1-9) + L-Leu-L-Met-NH2. It catalyses the reaction substance P + H2O = substance P(1-8) + Gly-L-Leu-L-Met-NH2. The catalysed reaction is substance P + H2O = L-Phe-L-Phe-Gly-L-Leu-L-Met-NH2 + substance P(1-6). It carries out the reaction neurotensin + H2O = neurotensin(1-11) + L-isoleucyl-L-leucine. The enzyme catalyses goralatide + H2O = N-acetyl-L-seryl-L-aspartate + L-lysyl-L-proline. It catalyses the reaction Met-enkephalin + H2O = L-phenylalanyl-L-methionine + L-tyrosylglycylglycine. The catalysed reaction is Leu-enkephalin + H2O = L-tyrosylglycylglycine + L-phenylalanyl-L-leucine. It carries out the reaction Met-enkephalin-Arg-Phe + H2O = L-arginyl-L-phenylalanine + Met-enkephalin. The dipeptidyl carboxypeptidase activity is strongly activated by chloride. The dipeptidyl carboxypeptidase activity is specifically inhibited by lisinopril, captopril and enalaprilat. With respect to regulation, strongly inhibited by lisinopril and captopril. Its function is as follows. Dipeptidyl carboxypeptidase that removes dipeptides from the C-terminus of a variety of circulating hormones, such as angiotensin I, bradykinin or enkephalins, thereby playing a key role in the regulation of blood pressure, electrolyte homeostasis or synaptic plasticity. Composed of two similar catalytic domains, each possessing a functional active site, with different selectivity for substrates. Plays a major role in the angiotensin-renin system that regulates blood pressure and sodium retention by the kidney by converting angiotensin I to angiotensin II, resulting in an increase of the vasoconstrictor activity of angiotensin. Also able to inactivate bradykinin, a potent vasodilator, and therefore enhance the blood pressure response. Acts as a regulator of synaptic transmission by mediating cleavage of neuropeptide hormones, such as substance P, neurotensin or enkephalins. Catalyzes degradation of different enkephalin neuropeptides (Met-enkephalin, Leu-enkephalin, Met-enkephalin-Arg-Phe and possibly Met-enkephalin-Arg-Gly-Leu). Acts as a regulator of synaptic plasticity in the nucleus accumbens of the brain by mediating cleavage of Met-enkephalin-Arg-Phe, a strong ligand of Mu-type opioid receptor OPRM1, into Met-enkephalin. Met-enkephalin-Arg-Phe cleavage by ACE decreases activation of OPRM1, leading to long-term synaptic potentiation of glutamate release. Also acts as a regulator of hematopoietic stem cell differentiation by mediating degradation of hemoregulatory peptide N-acetyl-SDKP (AcSDKP). Acts as a regulator of cannabinoid signaling pathway by mediating degradation of hemopressin, an antagonist peptide of the cannabinoid receptor CNR1. Involved in amyloid-beta metabolism by catalyzing degradation of Amyloid-beta protein 40 and Amyloid-beta protein 42 peptides, thereby preventing plaque formation. Catalyzes cleavage of cholecystokinin (maturation of Cholecystokinin-8 and Cholecystokinin-5) and Gonadoliberin-1 (both maturation and degradation) hormones. Degradation of hemoregulatory peptide N-acetyl-SDKP (AcSDKP) and amyloid-beta proteins is mediated by the N-terminal catalytic domain, while angiotensin I and cholecystokinin cleavage is mediated by the C-terminal catalytic region. In terms of biological role, soluble form that is released in blood plasma and other body fluids following proteolytic cleavage in the juxtamembrane stalk region. Isoform produced by alternative promoter usage that is specifically expressed in spermatocytes and adult testis, and which is required for male fertility. In contrast to somatic isoforms, only contains one catalytic domain. Acts as a dipeptidyl carboxypeptidase that removes dipeptides from the C-terminus of substrates. The identity of substrates that are needed for male fertility is unknown. May also have a glycosidase activity which releases GPI-anchored proteins from the membrane by cleaving the mannose linkage in the GPI moiety. The GPIase activity was reported to be essential for the egg-binding ability of the sperm. This activity is however unclear and has been challenged by other groups, suggesting that it may be indirect. In Pan troglodytes (Chimpanzee), this protein is Angiotensin-converting enzyme.